The chain runs to 514 residues: 2'-5'-oligoadenylate synthase-like protein (514 aa).

Ala2 is modified (N-acetylalanine). Ubiquitin-like domains follow at residues 354 to 433 (IHLT…IPSE) and 434 to 509 (IQVF…KGEA).

Belongs to the 2-5A synthase family. Specifically interacts with the ligand binding domain of the thyroid receptor (TR). TRIP14 does not require the presence of thyroid hormone for its interaction. Binds MBD1. As to expression, expressed in most tissues, with the highest levels in primary blood Leukocytes and other hematopoietic system tissues, colon, stomach and to some extent in testis.

It localises to the nucleus. Its subcellular location is the nucleolus. The protein resides in the cytoplasm. Does not have 2'-5'-OAS activity, but can bind double-stranded RNA. Displays antiviral activity against encephalomyocarditis virus (EMCV) and hepatitis C virus (HCV) via an alternative antiviral pathway independent of RNase L. This Homo sapiens (Human) protein is 2'-5'-oligoadenylate synthase-like protein (OASL).